A 62-amino-acid polypeptide reads, in one-letter code: Large ribosomal subunit protein bL33 (62 aa).

It belongs to the bacterial ribosomal protein bL33 family.

The protein is Large ribosomal subunit protein bL33 of Phocaeicola vulgatus (strain ATCC 8482 / DSM 1447 / JCM 5826 / CCUG 4940 / NBRC 14291 / NCTC 11154) (Bacteroides vulgatus).